Reading from the N-terminus, the 214-residue chain is MITAEMVKELRERTGAGMMDCKRALVETNGDIEKAIDELRTKGLAKAAKKAGRVASEGVVTSYIHGGGRIGVLVEVNCETDFVAKTNDFKQLAYDIAMQIAASNPEYLNREEVPQEVINREKEILKAQALEEGKPEKVIEKMVEGRVEKFFKERCLLEQAFIKDLDKSVQELINENIARMGENITIRRFARYEVGEGIEKESCDFASEVMSQLK.

The tract at residues 80-83 (TDFV) is involved in Mg(2+) ion dislocation from EF-Tu.

The protein belongs to the EF-Ts family.

The protein resides in the cytoplasm. In terms of biological role, associates with the EF-Tu.GDP complex and induces the exchange of GDP to GTP. It remains bound to the aminoacyl-tRNA.EF-Tu.GTP complex up to the GTP hydrolysis stage on the ribosome. This Syntrophomonas wolfei subsp. wolfei (strain DSM 2245B / Goettingen) protein is Elongation factor Ts.